Reading from the N-terminus, the 655-residue chain is Broad substrate specificity ATP-binding cassette transporter ABCG2 (655 aa).

Residues 1–395 (MSSSNVEVFI…KNLLGNPQAS (395 aa)) lie on the Cytoplasmic side of the membrane. Residues 37–286 (LSFHNICYRV…FESAGYHCEA (250 aa)) form the ABC transporter domain. Residues 80 to 87 (GPTGGGKS), 184 to 190 (RGVSGGE), Glu211, and His243 contribute to the ATP site. Thr362 is subject to Phosphothreonine; by PIM1. One can recognise an ABC transmembrane type-2 domain in the interval 389-651 (LGNPQASIAQ…TIAYLKLLFL (263 aa)). Residues 396-416 (IAQIIVTVVLGLVIGAIYFGL) traverse the membrane as a helical segment. Over 417–428 (KNDSTGIQNRAG) the chain is Extracellular. The chain crosses the membrane as a helical span at residues 429–449 (VLFFLTTNQCFSSVSAVELFV). Residues 450–477 (VEKKLFIHEYISGYYRVSSYFLGKLLSD) are Cytoplasmic-facing. A helical membrane pass occupies residues 478 to 498 (LLPMRMLPSIIFTCIVYFMLG). Residues 499–506 (LKPKADAF) are Extracellular-facing. A helical transmembrane segment spans residues 507–527 (FVMMFTLMMVAYSASSMALAI). At 528–535 (AAGQSVVS) the chain is on the cytoplasmic side. The helical transmembrane segment at 536–556 (VATLLMTICFVFMMIFSGLLV) threads the bilayer. Residues 557 to 630 (NLTTIASWLS…LSPWGLWKNH (74 aa)) lie on the Extracellular side of the membrane. A disulfide bridge links Cys592 with Cys608. N-linked (GlcNAc...) asparagine glycosylation is present at Asn596. A helical transmembrane segment spans residues 631-651 (VALACMIVIFLTIAYLKLLFL). The Cytoplasmic portion of the chain corresponds to 652–655 (KKYS).

This sequence belongs to the ABC transporter superfamily. ABCG family. Eye pigment precursor importer (TC 3.A.1.204) subfamily. As to quaternary structure, homodimer; disulfide-linked. The minimal functional unit is a homodimer, but the major oligomeric form in plasma membrane is a homotetramer with possibility of higher order oligomerization up to homododecamers. Post-translationally, N-glycosylated. Glycosylation-deficient ABCG2 is normally expressed and functional. In terms of processing, phosphorylated. Phosphorylation at Thr-362 by PIM1 is induced by drugs like mitoxantrone and is associated with cells increased drug resistance. It regulates the localization to the plasma membrane, the homooligomerization and therefore, the activity of the transporter. As to expression, highly expressed in placenta. Low expression in small intestine, liver and colon. Expressed in brain (at protein level).

It localises to the cell membrane. The protein localises to the apical cell membrane. Its subcellular location is the mitochondrion membrane. It catalyses the reaction ATP + H2O + xenobioticSide 1 = ADP + phosphate + xenobioticSide 2.. It carries out the reaction urate(in) + ATP + H2O = urate(out) + ADP + phosphate + H(+). The catalysed reaction is indoxyl sulfate(in) + ATP + H2O = indoxyl sulfate(out) + ADP + phosphate + H(+). The enzyme catalyses sphing-4-enine 1-phosphate(in) + ATP + H2O = sphing-4-enine 1-phosphate(out) + ADP + phosphate + H(+). It catalyses the reaction estrone 3-sulfate(in) + ATP + H2O = estrone 3-sulfate(out) + ADP + phosphate + H(+). It carries out the reaction dehydroepiandrosterone 3-sulfate(in) + ATP + H2O = dehydroepiandrosterone 3-sulfate(out) + ADP + phosphate + H(+). The catalysed reaction is 4-methylumbelliferone sulfate(in) + ATP + H2O = 4-methylumbelliferone sulfate(out) + ADP + phosphate + H(+). The enzyme catalyses 5,7-dimethyl-2-methylamino-4-(3-pyridylmethyl)-1,3-benzothiazol-6-yl beta-D-glucuronate(in) + ATP + H2O = 5,7-dimethyl-2-methylamino-4-(3-pyridylmethyl)-1,3-benzothiazol-6-yl beta-D-glucuronate(out) + ADP + phosphate + H(+). It catalyses the reaction 4-methylumbelliferone beta-D-glucuronate(in) + ATP + H2O = 4-methylumbelliferone beta-D-glucuronate(out) + ADP + phosphate + H(+). It carries out the reaction 5,7-dimethyl-2-methylamino-4-(3-pyridylmethyl)-1,3-benzothiazol-6-yl sulfate(in) + ATP + H2O = 5,7-dimethyl-2-methylamino-4-(3-pyridylmethyl)-1,3-benzothiazol-6-yl sulfate(out) + ADP + phosphate + H(+). The catalysed reaction is 17beta-estradiol 17-O-(beta-D-glucuronate)(in) + ATP + H2O = 17beta-estradiol 17-O-(beta-D-glucuronate)(out) + ADP + phosphate + H(+). The enzyme catalyses methotrexate(in) + ATP + H2O = methotrexate(out) + ADP + phosphate + H(+). It catalyses the reaction riboflavin(in) + ATP + H2O = riboflavin(out) + ADP + phosphate + H(+). It carries out the reaction pheophorbide a(in) + ATP + H2O = pheophorbide a(out) + ADP + phosphate + H(+). The catalysed reaction is itaconate(in) + ATP + H2O = itaconate(out) + ADP + phosphate + H(+). With respect to regulation, specifically inhibited by the fungal toxin fumitremorgin C and Ko143. Broad substrate specificity ATP-dependent transporter of the ATP-binding cassette (ABC) family that actively extrudes a wide variety of physiological compounds, dietary toxins and xenobiotics from cells. Involved in porphyrin homeostasis, mediating the export of protoporphyrin IX (PPIX) from both mitochondria to cytosol and cytosol to extracellular space, it also functions in the cellular export of heme. Also mediates the efflux of sphingosine-1-P from cells. Acts as a urate exporter functioning in both renal and extrarenal urate excretion. In kidney, it also functions as a physiological exporter of the uremic toxin indoxyl sulfate. Also involved in the excretion of steroids like estrone 3-sulfate/E1S, 3beta-sulfooxy-androst-5-en-17-one/DHEAS, and other sulfate conjugates. Mediates the secretion of the riboflavin and biotin vitamins into milk. Extrudes pheophorbide a, a phototoxic porphyrin catabolite of chlorophyll, reducing its bioavailability. Plays an important role in the exclusion of xenobiotics from the brain. It confers to cells a resistance to multiple drugs and other xenobiotics including mitoxantrone, pheophorbide, camptothecin, methotrexate, azidothymidine, and the anthracyclines daunorubicin and doxorubicin, through the control of their efflux. In placenta, it limits the penetration of drugs from the maternal plasma into the fetus. May play a role in early stem cell self-renewal by blocking differentiation. In inflammatory macrophages, exports itaconate from the cytosol to the extracellular compartment and limits the activation of TFEB-dependent lysosome biogenesis involved in antibacterial innate immune response. This chain is Broad substrate specificity ATP-binding cassette transporter ABCG2 (ABCG2), found in Homo sapiens (Human).